The primary structure comprises 145 residues: Acidic phospholipase A2 homolog textilotoxin C chain (145 aa).

The first 19 residues, 1-19 (MHPAHLLVLLGVYVSLLGA), serve as a signal peptide directing secretion. The propeptide occupies 20–27 (ARIPPLPL). Disulfide bonds link cysteine 38/cysteine 98, cysteine 54/cysteine 144, cysteine 56/cysteine 72, cysteine 71/cysteine 125, cysteine 78/cysteine 118, cysteine 87/cysteine 111, and cysteine 105/cysteine 116.

Belongs to the phospholipase A2 family. Group I subfamily. D49 sub-subfamily. Heterohexamer. 2 forms exist: 2 A or 2 B chains, 2 C chains and 2 covalently-linked D chains, and 1 A or 1 B, 1 C, 2 covalently-linked D chains and 2 differentially glycosylated covalently-linked D chains. Textilotoxin was originally described as pentameric. In terms of tissue distribution, expressed by the venom gland.

The protein localises to the secreted. In terms of biological role, snake venom oligomeric phospholipase A2 that has potent presynaptic neurotoxicity. Chain C is not itself neurotoxic, but it is essential for the neurotoxicity of textilotoxin. Chain C possesses a very low phospholipase activity. This Pseudonaja textilis (Eastern brown snake) protein is Acidic phospholipase A2 homolog textilotoxin C chain.